The chain runs to 141 residues: Histone H2B (141 aa).

Positions 1 to 10 (MPPKAAEKKP) are enriched in basic and acidic residues. The segment at 1–49 (MPPKAAEKKPSTGGKAPAGGKAPAEKKEAGKKTAAAASGDKKKRGKTRK) is disordered. N6-acetyllysine; alternate is present on residues Lys-8 and Lys-9. Residues Lys-8 and Lys-9 each participate in a glycyl lysine isopeptide (Lys-Gly) (interchain with G-Cter in SUMO); alternate cross-link. Residues 11–22 (STGGKAPAGGKA) are compositionally biased toward low complexity. An N6-acetyllysine modification is found at Lys-15. Lys-26 bears the N6-acetyllysine; alternate mark. Residue Lys-26 forms a Glycyl lysine isopeptide (Lys-Gly) (interchain with G-Cter in SUMO); alternate linkage. A Glycyl lysine isopeptide (Lys-Gly) (interchain with G-Cter in SUMO) cross-link involves residue Lys-27. Lys-135 participates in a covalent cross-link: Glycyl lysine isopeptide (Lys-Gly) (interchain with G-Cter in ubiquitin).

This sequence belongs to the histone H2B family. The nucleosome is a histone octamer containing two molecules each of H2A, H2B, H3 and H4 assembled in one H3-H4 heterotetramer and two H2A-H2B heterodimers. The octamer wraps approximately 147 bp of DNA. In terms of processing, monoubiquitinated by the ubc2-bre1 complex to form H2BK123ub1. H2BK123ub1 gives a specific tag for epigenetic transcriptional activation and is also prerequisite for H3K4me and H3K79me formation. H2BK123ub1 also modulates the formation of double-strand breaks during meiosis and is a prerequisite for DNA-damage checkpoint activation. Post-translationally, acetylated by gcn5 to form H2BK11ac and H2BK16ac. H2BK16ac can also be formed by esa1. Acetylation of N-terminal lysines and particularly formation of H2BK11acK16ac has a positive effect on transcription. Sumoylation to form H2BK6su or H2BK7su, and probably also H2BK16su or H2BK17su, occurs preferentially near the telomeres and represses gene transcription.

It localises to the nucleus. Its subcellular location is the chromosome. Functionally, core component of nucleosome. Nucleosomes wrap and compact DNA into chromatin, limiting DNA accessibility to the cellular machineries which require DNA as a template. Histones thereby play a central role in transcription regulation, DNA repair, DNA replication and chromosomal stability. DNA accessibility is regulated via a complex set of post-translational modifications of histones, also called histone code, and nucleosome remodeling. The chain is Histone H2B (htb1) from Aspergillus niger (strain ATCC MYA-4892 / CBS 513.88 / FGSC A1513).